Consider the following 336-residue polypeptide: Aspartate--ammonia ligase (336 aa).

It belongs to the class-II aminoacyl-tRNA synthetase family. AsnA subfamily.

It localises to the cytoplasm. The catalysed reaction is L-aspartate + NH4(+) + ATP = L-asparagine + AMP + diphosphate + H(+). It functions in the pathway amino-acid biosynthesis; L-asparagine biosynthesis; L-asparagine from L-aspartate (ammonia route): step 1/1. This Ruminiclostridium cellulolyticum (strain ATCC 35319 / DSM 5812 / JCM 6584 / H10) (Clostridium cellulolyticum) protein is Aspartate--ammonia ligase.